Here is a 188-residue protein sequence, read N- to C-terminus: dCTP deaminase (188 aa).

Residues 111-116, 135-137, Gln-156, Tyr-170, and Gln-180 each bind dCTP; these read KSTYAR and TLE. Residue Glu-137 is the Proton donor/acceptor of the active site.

This sequence belongs to the dCTP deaminase family. In terms of assembly, homotrimer.

It carries out the reaction dCTP + H2O + H(+) = dUTP + NH4(+). It participates in pyrimidine metabolism; dUMP biosynthesis; dUMP from dCTP (dUTP route): step 1/2. Functionally, catalyzes the deamination of dCTP to dUTP. The polypeptide is dCTP deaminase (Herminiimonas arsenicoxydans).